The sequence spans 513 residues: uncharacterized protein (513 aa).

The next 13 helical transmembrane spans lie at 3 to 23 (MTAF…TYFA), 47 to 67 (LAIA…GMIA), 71 to 91 (FDGF…LYIV), 129 to 149 (TFYM…LLGL), 153 to 173 (AAVL…GMIA), 177 to 197 (VQII…IIVF), 233 to 253 (ETLS…HILI), 273 to 293 (WIIG…AAFV), 320 to 340 (FLFA…VTGL), 374 to 394 (ASVA…SLNV), 395 to 415 (AFLV…LIVF), 424 to 444 (ASGA…LVSM), and 462 to 482 (LIPL…GAWL).

Belongs to the sodium:solute symporter (SSF) (TC 2.A.21) family.

It is found in the cell membrane. This is an uncharacterized protein from Bacillus subtilis (strain 168).